The following is a 392-amino-acid chain: Succinate--CoA ligase [ADP-forming] subunit beta (392 aa).

The ATP-grasp domain occupies 9–248 (KGILKQFGVA…ITEEDPLEYE (240 aa)). ATP contacts are provided by residues Lys-50, 57–59 (GRG), Glu-103, Met-106, and Glu-111. Asn-203 and Asp-217 together coordinate Mg(2+). Residues Asn-268 and 325–327 (GIV) contribute to the substrate site.

It belongs to the succinate/malate CoA ligase beta subunit family. Heterotetramer of two alpha and two beta subunits. It depends on Mg(2+) as a cofactor.

It catalyses the reaction succinate + ATP + CoA = succinyl-CoA + ADP + phosphate. The catalysed reaction is GTP + succinate + CoA = succinyl-CoA + GDP + phosphate. It functions in the pathway carbohydrate metabolism; tricarboxylic acid cycle; succinate from succinyl-CoA (ligase route): step 1/1. In terms of biological role, succinyl-CoA synthetase functions in the citric acid cycle (TCA), coupling the hydrolysis of succinyl-CoA to the synthesis of either ATP or GTP and thus represents the only step of substrate-level phosphorylation in the TCA. The beta subunit provides nucleotide specificity of the enzyme and binds the substrate succinate, while the binding sites for coenzyme A and phosphate are found in the alpha subunit. The chain is Succinate--CoA ligase [ADP-forming] subunit beta from Chlorobaculum parvum (strain DSM 263 / NCIMB 8327) (Chlorobium vibrioforme subsp. thiosulfatophilum).